Reading from the N-terminus, the 95-residue chain is Aspartyl/glutamyl-tRNA(Asn/Gln) amidotransferase subunit C (95 aa).

It belongs to the GatC family. In terms of assembly, heterotrimer of A, B and C subunits.

It carries out the reaction L-glutamyl-tRNA(Gln) + L-glutamine + ATP + H2O = L-glutaminyl-tRNA(Gln) + L-glutamate + ADP + phosphate + H(+). It catalyses the reaction L-aspartyl-tRNA(Asn) + L-glutamine + ATP + H2O = L-asparaginyl-tRNA(Asn) + L-glutamate + ADP + phosphate + 2 H(+). In terms of biological role, allows the formation of correctly charged Asn-tRNA(Asn) or Gln-tRNA(Gln) through the transamidation of misacylated Asp-tRNA(Asn) or Glu-tRNA(Gln) in organisms which lack either or both of asparaginyl-tRNA or glutaminyl-tRNA synthetases. The reaction takes place in the presence of glutamine and ATP through an activated phospho-Asp-tRNA(Asn) or phospho-Glu-tRNA(Gln). This Chromohalobacter salexigens (strain ATCC BAA-138 / DSM 3043 / CIP 106854 / NCIMB 13768 / 1H11) protein is Aspartyl/glutamyl-tRNA(Asn/Gln) amidotransferase subunit C.